A 787-amino-acid polypeptide reads, in one-letter code: Endonuclease MutS2 (787 aa).

331-338 contributes to the ATP binding site; it reads GPNTGGKT. One can recognise a Smr domain in the interval 711 to 786; that stretch reads IDVRGKTSDD…EQGVTIVELR (76 aa).

This sequence belongs to the DNA mismatch repair MutS family. MutS2 subfamily. Homodimer. Binds to stalled ribosomes, contacting rRNA.

Functionally, endonuclease that is involved in the suppression of homologous recombination and thus may have a key role in the control of bacterial genetic diversity. In terms of biological role, acts as a ribosome collision sensor, splitting the ribosome into its 2 subunits. Detects stalled/collided 70S ribosomes which it binds and splits by an ATP-hydrolysis driven conformational change. Acts upstream of the ribosome quality control system (RQC), a ribosome-associated complex that mediates the extraction of incompletely synthesized nascent chains from stalled ribosomes and their subsequent degradation. Probably generates substrates for RQC. This chain is Endonuclease MutS2, found in Caldicellulosiruptor saccharolyticus (strain ATCC 43494 / DSM 8903 / Tp8T 6331).